The following is a 313-amino-acid chain: uncharacterized protein (313 aa).

Residue A29–D61 coordinates NADP(+).

Belongs to the short-chain dehydrogenases/reductases (SDR) family. 2,4-dienoyl-CoA reductase subfamily.

This is an uncharacterized protein from Caenorhabditis elegans.